Here is a 432-residue protein sequence, read N- to C-terminus: 3-oxo-tetronate kinase (432 aa).

ATP is bound by residues H155, S272, A324, G344, E348, 370 to 373 (GGET), and G414.

Belongs to the four-carbon acid sugar kinase family.

It carries out the reaction 3-dehydro-L-erythronate + ATP = 3-dehydro-4-O-phospho-L-erythronate + ADP + H(+). It catalyses the reaction 3-dehydro-D-erythronate + ATP = 3-dehydro-4-O-phospho-D-erythronate + ADP + H(+). Functionally, catalyzes the ATP-dependent phosphorylation of 3-oxo-tetronate to 3-oxo-tetronate 4-phosphate. The chain is 3-oxo-tetronate kinase from Cupriavidus necator (strain ATCC 17699 / DSM 428 / KCTC 22496 / NCIMB 10442 / H16 / Stanier 337) (Ralstonia eutropha).